A 352-amino-acid chain; its full sequence is Ferredoxin--NADP reductase 2 (352 aa).

FAD is bound by residues E36, K44, Y48, I88, L123, D290, and S331.

This sequence belongs to the ferredoxin--NADP reductase type 2 family. Homodimer. It depends on FAD as a cofactor.

The enzyme catalyses 2 reduced [2Fe-2S]-[ferredoxin] + NADP(+) + H(+) = 2 oxidized [2Fe-2S]-[ferredoxin] + NADPH. This is Ferredoxin--NADP reductase 2 from Exiguobacterium sibiricum (strain DSM 17290 / CCUG 55495 / CIP 109462 / JCM 13490 / 255-15).